The following is a 522-amino-acid chain: Maturase K (522 aa).

Belongs to the intron maturase 2 family. MatK subfamily.

It localises to the plastid. It is found in the chloroplast. Usually encoded in the trnK tRNA gene intron. Probably assists in splicing its own and other chloroplast group II introns. In Sapindus saponaria (Soapberry), this protein is Maturase K.